Consider the following 1553-residue polypeptide: Dual oxidase 1 (1553 aa).

The first 21 residues, 1 to 21 (MGFRLALAWTLLVGPWMPMGA), serve as a signal peptide directing secretion. The Extracellular portion of the chain corresponds to 22 to 596 (RNSISWEVQR…YFKGSGFGFG (575 aa)). The tract at residues 26 to 593 (SWEVQRFDGW…MRDYFKGSGF (568 aa)) is peroxidase-like; mediates peroxidase activity. N-linked (GlcNAc...) asparagine glycans are attached at residues Asn-94, Asn-342, Asn-354, and Asn-534. The helical transmembrane segment at 597–617 (VTIGTLCCFPLVSLLSAWIVA) threads the bilayer. The Cytoplasmic portion of the chain corresponds to 618 to 1046 (QLRRRNFKRL…KRFVENYRRH (429 aa)). 3 consecutive EF-hand domains span residues 815 to 850 (PQDMFVESMFSLADKDGNGYLSFREFLDILVVFMKG), 851 to 886 (SPEEKSRLMFRMYDFDGNGLISKDEFIRMLRSFIEI), and 895 to 930 (QLTEVVESMFREAGFQDKQELTWEDFHFMLRDHDSE). Residues Asp-828, Asp-830, Asn-832, Tyr-834, Glu-839, Asp-864, Asp-866, Asn-868, and Glu-875 each contribute to the Ca(2+) site. The tract at residues 956 to 1250 (YISQEKLCPS…GSFALIQLPR (295 aa)) is interaction with TXNDC11. Residues 1047–1067 (IGCLAVFYTIAGGLFLERAYY) traverse the membrane as a helical segment. The Extracellular portion of the chain corresponds to 1068–1082 (YAFAAHHMGITDTTR). The helical transmembrane segment at 1083–1103 (VGIILSRGTAASISFMFSYIL) threads the bilayer. A Ferric oxidoreductase domain is found at 1089–1271 (RGTAASISFM…YVGDKLVSLS (183 aa)). Over 1104-1138 (LTMCRNLITFLRETFLNRYVPFDAAVDFHRLIAST) the chain is Cytoplasmic. The chain crosses the membrane as a helical span at residues 1139-1159 (AIILTVLHSAGHVVNVYLFSI). The Extracellular segment spans residues 1160-1190 (SPLSVLSCLFPGLFHDNGSEFPQKYYWWFFQ). The helical transmembrane segment at 1191–1211 (TVPGLTGVMLLLILAIMYVFA) threads the bilayer. The Cytoplasmic segment spans residues 1212 to 1228 (SHHFRRCSFRGFWLTHH). A helical transmembrane segment spans residues 1229-1249 (LYILLYMLLIIHGSFALIQLP). Residue Arg-1250 is a topological domain, extracellular. The chain crosses the membrane as a helical span at residues 1251 to 1271 (FHIFFLVPALIYVGDKLVSLS). One can recognise an FAD-binding FR-type domain in the interval 1272–1378 (RKKVEISVVK…DGPFGEGHQE (107 aa)). At 1272–1553 (RKKVEISVVK…THFSHHYENF (282 aa)) the chain is on the cytoplasmic side.

In the N-terminal section; belongs to the peroxidase family. Interacts with TXNDC11, TPO and CYBA. N-glycosylated. As to expression, specifically expressed in thyroid.

It localises to the apical cell membrane. The catalysed reaction is NADH + O2 + H(+) = H2O2 + NAD(+). The enzyme catalyses NADPH + O2 + H(+) = H2O2 + NADP(+). The protein operates within hormone biosynthesis; thyroid hormone biosynthesis. With respect to regulation, the NADPH oxidase activity is calcium-dependent. Peroxidase activity is inhibited by aminobenzohydrazide. In terms of biological role, generates hydrogen peroxide which is required for the activity of thyroid peroxidase/TPO and lactoperoxidase/LPO. Plays a role in thyroid hormones synthesis and lactoperoxidase-mediated antimicrobial defense at the surface of mucosa. May have its own peroxidase activity through its N-terminal peroxidase-like domain. This is Dual oxidase 1 (DUOX1) from Sus scrofa (Pig).